Reading from the N-terminus, the 748-residue chain is Sulfhydryl oxidase 1 (748 aa).

A signal peptide spans Met1 to Ala32. One can recognise a Thioredoxin domain in the interval Ala33 to Ser159. Catalysis depends on nucleophile residues Cys73 and Cys76. Intrachain disulfides connect Cys73-Cys76 and Cys104-Cys113. 2 N-linked (GlcNAc...) asparagine glycosylation sites follow: Asn133 and Asn246. A disulfide bond links Cys396 and Cys408. The region spanning Ser399–Trp506 is the ERV/ALR sulfhydryl oxidase domain. Residues Arg404, Trp411, His415, Asp454, His458, Trp481–Asn488, Lys503, and Trp506 each bind FAD. Cys452 and Cys455 are joined by a disulfide. An intrachain disulfide couples Cys512 to Cys515. Residues Gly581–Leu647 form a disordered region. The segment covering Glu628–Gln638 has biased composition (basic and acidic residues). A helical membrane pass occupies residues Ile711–Tyr731.

This sequence belongs to the quiescin-sulfhydryl oxidase (QSOX) family. As to quaternary structure, monomer. Requires FAD as cofactor. In terms of processing, N-glycosylated. O-glycosylated on Thr and Ser residues. As to expression, detected in skin (at protein level). Expressed in the seminal vesicles and skin.

It localises to the golgi apparatus membrane. The protein localises to the secreted. It carries out the reaction 2 R'C(R)SH + O2 = R'C(R)S-S(R)CR' + H2O2. In terms of biological role, catalyzes the oxidation of sulfhydryl groups in peptide and protein thiols to disulfides with the reduction of oxygen to hydrogen peroxide. Plays a role in disulfide bond formation in a variety of extracellular proteins. In fibroblasts, required for normal incorporation of laminin into the extracellular matrix, and thereby for normal cell-cell adhesion and cell migration. The sequence is that of Sulfhydryl oxidase 1 (Qsox1) from Mus musculus (Mouse).